The sequence spans 357 residues: Pheromone receptor 1 (357 aa).

A run of 7 helical transmembrane segments spans residues 5-25, 32-52, 67-90, 110-130, 145-165, 206-226, and 268-288; these read ITPF…AWHI, LIML…NSMV, LSVR…ARKL, VIID…LMIV, WPMM…VIVV, LLLL…GTIA, and LILA…MFGL. The interval 338-357 is disordered; the sequence is ANTSTKSEKSDIDMRGSEAA. Residues 343 to 357 are compositionally biased toward basic and acidic residues; the sequence is KSEKSDIDMRGSEAA.

Belongs to the G-protein coupled receptor 4 family.

The protein resides in the membrane. Its function is as follows. Receptor for the A2 pheromone, a prenylated mating factor. The polypeptide is Pheromone receptor 1 (PRA1) (Mycosarcoma maydis (Corn smut fungus)).